We begin with the raw amino-acid sequence, 324 residues long: MKPSVILYKALPDDLLQRLQEHFTVHQVANLSPQTIEQNAAIFAEAEGLLGSNENVDAALLGKMPKLRATSTISVGYDNFDVDALTARKILLMHTPTVLTETVADTLMALVLSTARRVVEVAERVKAGEWTASIGPDWYGTDVHHKTLGIVGMGRIGMALAQRAHFGFNMPILYNARRHHKEAEERFNARYCDLDSLLQESDFVCLILPLTDETYHLFGAEQFGKMKSSAIFINAGRGPVVDENALIAALQKGEIHAAGLDVFEQEPLSVDSPLLSMANVVAVPHIGSATHETRYGMAACAVDNLIDALQGKVEKNCVNPHVAD.

Active-site residues include Arg-237 and Glu-266. The active-site Proton donor is His-285.

Belongs to the D-isomer specific 2-hydroxyacid dehydrogenase family. GhrB subfamily. In terms of assembly, homodimer.

Its subcellular location is the cytoplasm. It carries out the reaction glycolate + NADP(+) = glyoxylate + NADPH + H(+). The enzyme catalyses (R)-glycerate + NAD(+) = 3-hydroxypyruvate + NADH + H(+). It catalyses the reaction (R)-glycerate + NADP(+) = 3-hydroxypyruvate + NADPH + H(+). In terms of biological role, catalyzes the NADPH-dependent reduction of glyoxylate and hydroxypyruvate into glycolate and glycerate, respectively. This chain is Glyoxylate/hydroxypyruvate reductase B, found in Escherichia coli O17:K52:H18 (strain UMN026 / ExPEC).